Consider the following 132-residue polypeptide: Small ribosomal subunit protein uS8 (132 aa).

This sequence belongs to the universal ribosomal protein uS8 family. In terms of assembly, part of the 30S ribosomal subunit. Contacts proteins S5 and S12.

Its function is as follows. One of the primary rRNA binding proteins, it binds directly to 16S rRNA central domain where it helps coordinate assembly of the platform of the 30S subunit. The chain is Small ribosomal subunit protein uS8 from Rickettsia felis (strain ATCC VR-1525 / URRWXCal2) (Rickettsia azadi).